The chain runs to 598 residues: Elongation factor 4 (598 aa).

The region spanning 4–181 (KKIRNFAIIA…AIVNLIPPPQ (178 aa)) is the tr-type G domain. GTP is bound by residues 16 to 21 (DHGKST) and 128 to 131 (NKID).

The protein belongs to the TRAFAC class translation factor GTPase superfamily. Classic translation factor GTPase family. LepA subfamily.

Its subcellular location is the cell membrane. It carries out the reaction GTP + H2O = GDP + phosphate + H(+). Its function is as follows. Required for accurate and efficient protein synthesis under certain stress conditions. May act as a fidelity factor of the translation reaction, by catalyzing a one-codon backward translocation of tRNAs on improperly translocated ribosomes. Back-translocation proceeds from a post-translocation (POST) complex to a pre-translocation (PRE) complex, thus giving elongation factor G a second chance to translocate the tRNAs correctly. Binds to ribosomes in a GTP-dependent manner. In Mesomycoplasma hyopneumoniae (strain 232) (Mycoplasma hyopneumoniae), this protein is Elongation factor 4.